We begin with the raw amino-acid sequence, 234 residues long: 7-cyano-7-deazaguanine synthase (234 aa).

8–18 (FSGGQDSTTCA) lines the ATP pocket. Zn(2+) contacts are provided by C194, C202, C205, and C208.

Belongs to the QueC family. Zn(2+) is required as a cofactor.

The catalysed reaction is 7-carboxy-7-deazaguanine + NH4(+) + ATP = 7-cyano-7-deazaguanine + ADP + phosphate + H2O + H(+). It functions in the pathway purine metabolism; 7-cyano-7-deazaguanine biosynthesis. Catalyzes the ATP-dependent conversion of 7-carboxy-7-deazaguanine (CDG) to 7-cyano-7-deazaguanine (preQ(0)). The polypeptide is 7-cyano-7-deazaguanine synthase (Gloeobacter violaceus (strain ATCC 29082 / PCC 7421)).